We begin with the raw amino-acid sequence, 154 residues long: Large ribosomal subunit protein bL19 (154 aa).

The interval 1–33 (MAADPKDTTVTDENTETAATAEVETVASAPTSP) is disordered. Low complexity predominate over residues 16-27 (ETAATAEVETVA).

The protein belongs to the bacterial ribosomal protein bL19 family.

Its function is as follows. This protein is located at the 30S-50S ribosomal subunit interface and may play a role in the structure and function of the aminoacyl-tRNA binding site. The chain is Large ribosomal subunit protein bL19 from Parasynechococcus marenigrum (strain WH8102).